A 182-amino-acid polypeptide reads, in one-letter code: Large ribosomal subunit protein bL25 (182 aa).

This sequence belongs to the bacterial ribosomal protein bL25 family. CTC subfamily. Part of the 50S ribosomal subunit; part of the 5S rRNA/L5/L18/L25 subcomplex. Contacts the 5S rRNA. Binds to the 5S rRNA independently of L5 and L18.

Functionally, this is one of the proteins that binds to the 5S RNA in the ribosome where it forms part of the central protuberance. The polypeptide is Large ribosomal subunit protein bL25 (Borreliella burgdorferi (strain ATCC 35210 / DSM 4680 / CIP 102532 / B31) (Borrelia burgdorferi)).